Here is a 238-residue protein sequence, read N- to C-terminus: Probable transcriptional regulatory protein SAK_1658 (238 aa).

The protein belongs to the TACO1 family. YeeN subfamily.

The protein localises to the cytoplasm. This Streptococcus agalactiae serotype Ia (strain ATCC 27591 / A909 / CDC SS700) protein is Probable transcriptional regulatory protein SAK_1658.